We begin with the raw amino-acid sequence, 349 residues long: Merozoite surface protein P38 (349 aa).

Residues 1–21 (MKRWSIITGIVIIFCILTCKG) form the signal peptide. 6-Cys domains lie at 22-149 (QVEN…ISNG) and 153-301 (KIPG…YLTN). 4 disulfide bridges follow: Cys-77–Cys-127, Cys-157–Cys-183, Cys-197–Cys-278, and Cys-208–Cys-276. N-linked (GlcNAc...) asparagine glycosylation is found at Asn-294, Asn-295, and Asn-301. Asn-315 carries GPI-anchor amidated asparagine lipidation. A propeptide spans 316 to 349 (SEIFERIEREEISFAFSSYLSITLILLYLFFLNF) (removed in mature form).

It localises to the cell surface. Its subcellular location is the cell membrane. The protein is Merozoite surface protein P38 (PFS38) of Plasmodium falciparum (isolate 3D7).